The primary structure comprises 380 residues: MRLLALHVHDFRNLPQVQLTPSAHATIAVGQNGQGKTNLLEALYFLATLKPLRAGRLSELVRWGSQGARVTGRFLLKGAEREIAVEVGGGTRQAFVDGKKASSLEDYFGGVSVVAFTPDDLEVVKGGPDSRRGFLDRAVFNRFPAFLRESREYARALKNRNRLLREGHTVDAVYLEAYDETLAKAGARIYSRRRALMAELAPRAQATFASIGRTVDPAVYNYRPAHLEGDFAAADETALAAMLRESLSARLRRDMERGFTSVGPHSDDVSVTLGGRSARAYASQGQQRALVLGWKIAEIENLEAAMGFLPLLLLDDVSSELDPERNAYLMGYLAQSGAQVVLTTTDGSLVRGAAADDTLWLDVHGGQVAVRADAEPPPAN.

30–37 (GQNGQGKT) lines the ATP pocket.

It belongs to the RecF family.

The protein localises to the cytoplasm. The RecF protein is involved in DNA metabolism; it is required for DNA replication and normal SOS inducibility. RecF binds preferentially to single-stranded, linear DNA. It also seems to bind ATP. The polypeptide is DNA replication and repair protein RecF (Myxococcus xanthus (strain DK1622)).